The primary structure comprises 236 residues: Phosphoribosylaminoimidazole-succinocarboxamide synthase (236 aa).

The protein belongs to the SAICAR synthetase family.

It carries out the reaction 5-amino-1-(5-phospho-D-ribosyl)imidazole-4-carboxylate + L-aspartate + ATP = (2S)-2-[5-amino-1-(5-phospho-beta-D-ribosyl)imidazole-4-carboxamido]succinate + ADP + phosphate + 2 H(+). Its pathway is purine metabolism; IMP biosynthesis via de novo pathway; 5-amino-1-(5-phospho-D-ribosyl)imidazole-4-carboxamide from 5-amino-1-(5-phospho-D-ribosyl)imidazole-4-carboxylate: step 1/2. The chain is Phosphoribosylaminoimidazole-succinocarboxamide synthase from Rickettsia typhi (strain ATCC VR-144 / Wilmington).